Reading from the N-terminus, the 169-residue chain is uncharacterized protein (169 aa).

Its subcellular location is the mitochondrion. This is an uncharacterized protein from Marchantia polymorpha (Common liverwort).